Consider the following 129-residue polypeptide: NHP2-like protein 1 homolog (129 aa).

The protein belongs to the eukaryotic ribosomal protein eL8 family.

The protein localises to the nucleus. The protein resides in the nucleolus. In terms of biological role, binds to the 5'-stem-loop of U4 snRNA and may play a role in the late stage of spliceosome assembly. The protein undergoes a conformational change upon RNA-binding. This is NHP2-like protein 1 homolog from Dictyostelium discoideum (Social amoeba).